The sequence spans 426 residues: Enolase (426 aa).

Q165 contacts (2R)-2-phosphoglycerate. E209 (proton donor) is an active-site residue. Mg(2+) contacts are provided by D244, E287, and D313. Residues K338, R367, S368, and K389 each contribute to the (2R)-2-phosphoglycerate site. Catalysis depends on K338, which acts as the Proton acceptor.

This sequence belongs to the enolase family. The cofactor is Mg(2+).

The protein localises to the cytoplasm. It is found in the secreted. Its subcellular location is the cell surface. It carries out the reaction (2R)-2-phosphoglycerate = phosphoenolpyruvate + H2O. It functions in the pathway carbohydrate degradation; glycolysis; pyruvate from D-glyceraldehyde 3-phosphate: step 4/5. Functionally, catalyzes the reversible conversion of 2-phosphoglycerate (2-PG) into phosphoenolpyruvate (PEP). It is essential for the degradation of carbohydrates via glycolysis. This Methanococcus maripaludis (strain C7 / ATCC BAA-1331) protein is Enolase.